A 116-amino-acid polypeptide reads, in one-letter code: Large ribosomal subunit protein bL17 (116 aa).

It belongs to the bacterial ribosomal protein bL17 family. In terms of assembly, part of the 50S ribosomal subunit. Contacts protein L32.

The polypeptide is Large ribosomal subunit protein bL17 (Helicobacter hepaticus (strain ATCC 51449 / 3B1)).